The following is a 312-amino-acid chain: Malate dehydrogenase (312 aa).

NAD(+) contacts are provided by residues 12–17 and D36; that span reads GAGFTG. The substrate site is built by R87 and R93. NAD(+) contacts are provided by residues N100 and 123–125; that span reads LTN. N125 serves as a coordination point for substrate. Position 149 is a phosphoserine (S149). Position 156 (R156) interacts with substrate. H180 acts as the Proton acceptor in catalysis.

The protein belongs to the LDH/MDH superfamily. MDH type 3 family.

The enzyme catalyses (S)-malate + NAD(+) = oxaloacetate + NADH + H(+). In terms of biological role, catalyzes the reversible oxidation of malate to oxaloacetate. This is Malate dehydrogenase from Anoxybacillus flavithermus (strain DSM 21510 / WK1).